The following is a 313-amino-acid chain: Protein OPG185 (313 aa).

Positions M1–A16 are cleaved as a signal peptide. The Virion surface portion of the chain corresponds to T17–D274. 6 N-linked (GlcNAc...) asparagine; by host glycosylation sites follow: N37, N69, N112, N159, N194, and N252. The helical transmembrane segment at F275–I295 threads the bilayer. Residues T296–V313 lie on the Intravirion side of the membrane.

The protein belongs to the orthopoxvirus OPG185 family. Heterodimerizes with OPG040. The heterodimer OPG185-OPG040 interacts with components of the entry fusion complex OPG143 and OPG094. Heterodimer with C3/VPC protein; disulfide-linked. In terms of processing, glycosylated; contains phosphate and sulfate-substituted glycans. O-glycosylation is required for hemagglutination and hemadsorption activities of infected cell membranes.

The protein resides in the virion membrane. Its subcellular location is the host membrane. In terms of biological role, prevents cell to cell fusion by interacting with and directing the viral OPG040 protein on the host plasma membrane. The OPG185-OPG040 complex associates with components of the entry fusion complex (EFC) presumably to avoid superinfection and syncytium formation. Via its interaction with C3/VCP protein, protects the infected cell and probably also the extracellular enveloped virus from complement attack. The polypeptide is Protein OPG185 (OPG185) (Monkeypox virus).